The primary structure comprises 405 residues: Acetate kinase (405 aa).

Asparagine 7 serves as a coordination point for Mg(2+). Residue lysine 14 coordinates ATP. Arginine 98 contributes to the substrate binding site. Aspartate 156 (proton donor/acceptor) is an active-site residue. Residues 215–219, 290–292, and 338–342 contribute to the ATP site; these read HLGNG, DLR, and GVGEN. Residue glutamate 391 participates in Mg(2+) binding.

The protein belongs to the acetokinase family. Homodimer. Mg(2+) is required as a cofactor. Mn(2+) serves as cofactor.

It is found in the cytoplasm. It carries out the reaction acetate + ATP = acetyl phosphate + ADP. It participates in metabolic intermediate biosynthesis; acetyl-CoA biosynthesis; acetyl-CoA from acetate: step 1/2. Catalyzes the formation of acetyl phosphate from acetate and ATP. Can also catalyze the reverse reaction. The polypeptide is Acetate kinase (Gloeobacter violaceus (strain ATCC 29082 / PCC 7421)).